The sequence spans 261 residues: 5'-nucleotidase SurE (261 aa).

Residues aspartate 8, aspartate 9, serine 39, and asparagine 91 each coordinate a divalent metal cation.

This sequence belongs to the SurE nucleotidase family. It depends on a divalent metal cation as a cofactor.

The protein resides in the cytoplasm. The enzyme catalyses a ribonucleoside 5'-phosphate + H2O = a ribonucleoside + phosphate. Functionally, nucleotidase that shows phosphatase activity on nucleoside 5'-monophosphates. The sequence is that of 5'-nucleotidase SurE from Polaromonas naphthalenivorans (strain CJ2).